The primary structure comprises 127 residues: Phospholipase A2 homolog otoconin-22 (127 aa).

N-linked (GlcNAc...) asparagine glycosylation is present at N20. 7 disulfides stabilise this stretch: C26–C120, C28–C44, C43–C99, C49–C127, C50–C92, C59–C85, and C78–C90. The N-linked (GlcNAc...) asparagine glycan is linked to N113.

The protein belongs to the phospholipase A2 family. As to quaternary structure, monomer. Otoconial membrane in the maculae of the saccule and utricle. Otoconia are composites of proteins and inorganic crystals formed in the peripheral portion of the vestibular system of vertebrates. The otoconial membranes contain small crystals of calcium carbonate known as otoliths (ear stones) if there is a single deposit or as otoconia (ear dust) if there are many. Each mineral polymorph of otoconia has a protein unique to that polymorph.

The protein localises to the secreted. Major protein of the aragonitic otoconia. It is unlikely that this protein has phospholipase A2 activity. The sequence is that of Phospholipase A2 homolog otoconin-22 from Xenopus laevis (African clawed frog).